The chain runs to 419 residues: L-rhamnose isomerase (419 aa).

Mn(2+)-binding residues include His-262, Asp-294, and Asp-296.

The protein belongs to the rhamnose isomerase family. Homotetramer. Mn(2+) is required as a cofactor.

The protein resides in the cytoplasm. The enzyme catalyses L-rhamnopyranose = L-rhamnulose. The protein operates within carbohydrate degradation; L-rhamnose degradation; glycerone phosphate from L-rhamnose: step 1/3. Functionally, catalyzes the interconversion of L-rhamnose and L-rhamnulose. This Enterobacter sp. (strain 638) protein is L-rhamnose isomerase.